A 244-amino-acid polypeptide reads, in one-letter code: ATP synthase subunit a (244 aa).

Helical transmembrane passes span 25–45 (ISFT…LLIF), 85–105 (YFAF…FGMI), 115–135 (IIVT…IGFM), 144–164 (LFVP…IEII), 193–213 (GFVI…SVAL), and 216–236 (LEIL…CIYL).

Belongs to the ATPase A chain family. As to quaternary structure, F-type ATPases have 2 components, CF(1) - the catalytic core - and CF(0) - the membrane proton channel. CF(1) has five subunits: alpha(3), beta(3), gamma(1), delta(1), epsilon(1). CF(0) has three main subunits: a(1), b(2) and c(9-12). The alpha and beta chains form an alternating ring which encloses part of the gamma chain. CF(1) is attached to CF(0) by a central stalk formed by the gamma and epsilon chains, while a peripheral stalk is formed by the delta and b chains.

It is found in the cell inner membrane. Functionally, key component of the proton channel; it plays a direct role in the translocation of protons across the membrane. The sequence is that of ATP synthase subunit a from Pelagibacter ubique (strain HTCC1062).